The sequence spans 274 residues: Penicillin-insensitive murein endopeptidase (274 aa).

The N-terminal stretch at 1–19 is a signal peptide; sequence MKKTAIALLAWFVSSASLA. Disulfide bonds link Cys-44–Cys-265, Cys-187–Cys-235, and Cys-216–Cys-223. Zn(2+) is bound by residues His-110, His-113, Asp-120, Asp-147, His-150, and His-211. The disordered stretch occupies residues 225-274; the sequence is DQPLPPPGDGCGAELQSWFEPPKLGTTKPEKKTPPPLPPSCQALLDEHVL.

The protein belongs to the peptidase M74 family. As to quaternary structure, dimer. Zn(2+) is required as a cofactor.

It localises to the periplasm. Functionally, murein endopeptidase that cleaves the D-alanyl-meso-2,6-diamino-pimelyl amide bond that connects peptidoglycan strands. Likely plays a role in the removal of murein from the sacculus. The sequence is that of Penicillin-insensitive murein endopeptidase from Salmonella paratyphi B (strain ATCC BAA-1250 / SPB7).